The sequence spans 265 residues: Mlc titration factor A (265 aa).

Residues histidine 111, histidine 148, histidine 152, and glutamate 211 each contribute to the Zn(2+) site.

The protein belongs to the MtfA family. In terms of assembly, interacts with Mlc. Zn(2+) serves as cofactor.

The protein localises to the cytoplasm. In terms of biological role, involved in the modulation of the activity of the glucose-phosphotransferase system (glucose-PTS). Interacts with the transcriptional repressor Mlc, preventing its interaction with DNA and leading to the modulation of expression of genes regulated by Mlc, including ptsG, which encodes the PTS system glucose-specific EIICB component. Shows zinc-dependent metallopeptidase activity. The polypeptide is Mlc titration factor A (Escherichia coli O17:K52:H18 (strain UMN026 / ExPEC)).